Consider the following 218-residue polypeptide: Eukaryotic translation initiation factor 3 subunit K (218 aa).

The region spanning 42 to 204 is the PCI domain; that stretch reads YDLEANLAVL…NIKPKNIVEK (163 aa).

This sequence belongs to the eIF-3 subunit K family. As to quaternary structure, component of the eukaryotic translation initiation factor 3 (eIF-3) complex, which is composed of 13 subunits: eif3a, eif3b, eif3c, eif3d, eif3e, eif3f, eif3g, eif3h, eif3i, eif3j, eif3k, eif3l and eif3m.

The protein localises to the nucleus. The protein resides in the cytoplasm. In terms of biological role, component of the eukaryotic translation initiation factor 3 (eIF-3) complex, which is involved in protein synthesis of a specialized repertoire of mRNAs and, together with other initiation factors, stimulates binding of mRNA and methionyl-tRNAi to the 40S ribosome. The eIF-3 complex specifically targets and initiates translation of a subset of mRNAs involved in cell proliferation. The chain is Eukaryotic translation initiation factor 3 subunit K (eif3k) from Xenopus laevis (African clawed frog).